Consider the following 155-residue polypeptide: Large ribosomal subunit protein eL24 (155 aa).

The span at 94–129 shows a compositional bias: basic and acidic residues; that stretch reads RSLKPEVRKAQRDEKKKADKEKKKADKAARKSEKAK. Residues 94–155 form a disordered region; it reads RSLKPEVRKA…AFQKVAATSR (62 aa).

The protein belongs to the eukaryotic ribosomal protein eL24 family.

This Kluyveromyces lactis (strain ATCC 8585 / CBS 2359 / DSM 70799 / NBRC 1267 / NRRL Y-1140 / WM37) (Yeast) protein is Large ribosomal subunit protein eL24 (RPL24).